We begin with the raw amino-acid sequence, 698 residues long: Glycine--tRNA ligase beta subunit (698 aa).

It belongs to the class-II aminoacyl-tRNA synthetase family. Tetramer of two alpha and two beta subunits.

It localises to the cytoplasm. It carries out the reaction tRNA(Gly) + glycine + ATP = glycyl-tRNA(Gly) + AMP + diphosphate. The protein is Glycine--tRNA ligase beta subunit of Xanthomonas campestris pv. campestris (strain B100).